A 336-amino-acid polypeptide reads, in one-letter code: Ferrochelatase (336 aa).

Fe cation-binding residues include His206 and Glu287.

It belongs to the ferrochelatase family.

Its subcellular location is the cytoplasm. The enzyme catalyses heme b + 2 H(+) = protoporphyrin IX + Fe(2+). It participates in porphyrin-containing compound metabolism; protoheme biosynthesis; protoheme from protoporphyrin-IX: step 1/1. Its function is as follows. Catalyzes the ferrous insertion into protoporphyrin IX. The protein is Ferrochelatase of Neisseria gonorrhoeae (strain ATCC 700825 / FA 1090).